The primary structure comprises 550 residues: Glucose-6-phosphate isomerase 2 (550 aa).

Glu-357 (proton donor) is an active-site residue. Active-site residues include His-388 and Lys-514. Residues 527–550 (DTGALGHDSSTNGLIRHYRERHGK) form a disordered region.

The protein belongs to the GPI family.

Its subcellular location is the cytoplasm. The enzyme catalyses alpha-D-glucose 6-phosphate = beta-D-fructose 6-phosphate. It participates in carbohydrate biosynthesis; gluconeogenesis. The protein operates within carbohydrate degradation; glycolysis; D-glyceraldehyde 3-phosphate and glycerone phosphate from D-glucose: step 2/4. In terms of biological role, catalyzes the reversible isomerization of glucose-6-phosphate to fructose-6-phosphate. In Chromobacterium violaceum (strain ATCC 12472 / DSM 30191 / JCM 1249 / CCUG 213 / NBRC 12614 / NCIMB 9131 / NCTC 9757 / MK), this protein is Glucose-6-phosphate isomerase 2.